The primary structure comprises 719 residues: ATP-dependent RNA helicase p62 (719 aa).

The interval 94–234 (AQSQRAFRDS…GSQDLPMRPV (141 aa)) is disordered. 2 stretches are compositionally biased toward basic and acidic residues: residues 99 to 108 (AFRDSSKPDS) and 137 to 171 (EEIK…DRRG). The span at 172-188 (GGGGGNRFGGGGGGGDY) shows a compositional bias: gly residues. A compositionally biased stretch (basic and acidic residues) spans 194–205 (GRVEKRRDDRGG). Residues 206-226 (GNRFGGGGGFGDRRGGGGGGS) are compositionally biased toward gly residues. The Q motif motif lies at 281 to 309 (QDFSEVHLPDYVMKEIRRQGYKAPTAIQA). A Helicase ATP-binding domain is found at 312 to 487 (WPIAMSGSNF…EDFLGNYIQI (176 aa)). Residue 325–332 (AKTGSGKT) participates in ATP binding. Residues 435 to 438 (DEAD) carry the DEAD box motif. In terms of domain architecture, Helicase C-terminal spans 519-664 (LLSDIYDTSE…EINPALENLA (146 aa)). Residues 689-719 (GGGFKKGSLSNGRGFGGGGGGGGEGRHSRFD) are disordered. Residues 701 to 711 (RGFGGGGGGGG) are compositionally biased toward gly residues.

The protein belongs to the DEAD box helicase family. DDX5/DBP2 subfamily. As to quaternary structure, interacts with Fmr1 to form the RNA-induced silencing complex (RISC), a ribonucleoprotein (RNP) complex involved in translation regulation, other components of the complex are RpL5, RpL11, AGO2 and Dcr-1.

Its subcellular location is the nucleus. The protein localises to the nucleolus. It localises to the cytoplasm. The protein resides in the cytosol. The catalysed reaction is ATP + H2O = ADP + phosphate + H(+). As an RNA helicase, unwinds RNA and alters RNA structures through ATP binding and hydrolysis. Involved in multiple cellular processes, including pre-mRNA splicing, alternative splicing, rRNA processing and miRNA processing, as well as transcription regulation. Plays a role in innate immunity. Specifically restricts bunyavirus infection, including Rift Valley fever virus (RVFV) or La Crosse virus (LACV), but not vesicular stomatitis virus (VSV), in an interferon- and DROSHA-independent manner. This chain is ATP-dependent RNA helicase p62 (Rm62), found in Drosophila melanogaster (Fruit fly).